Here is a 406-residue protein sequence, read N- to C-terminus: Peptidase T (406 aa).

H78 lines the Zn(2+) pocket. Residue D80 is part of the active site. Residue D139 coordinates Zn(2+). E173 functions as the Proton acceptor in the catalytic mechanism. 3 residues coordinate Zn(2+): E174, D196, and H378.

This sequence belongs to the peptidase M20B family. Zn(2+) serves as cofactor.

Its subcellular location is the cytoplasm. It carries out the reaction Release of the N-terminal residue from a tripeptide.. Functionally, cleaves the N-terminal amino acid of tripeptides. The polypeptide is Peptidase T (Clostridium perfringens (strain SM101 / Type A)).